Consider the following 179-residue polypeptide: uncharacterized protein (179 aa).

2 stretches are compositionally biased toward polar residues: residues 1 to 37 (PLGA…TNPG) and 60 to 70 (IPTQSTTTFRS). 2 disordered regions span residues 1-41 (PLGA…PSAK) and 60-82 (IPTQ…PGRR).

In terms of tissue distribution, component of the acid-soluble and acid-insoluble organic matrix of calcified shell layers (at protein level).

The protein resides in the secreted. This is an uncharacterized protein from Haliotis asinina (Donkey's ear abalone).